Reading from the N-terminus, the 345-residue chain is Baculoviral IAP repeat-containing protein 7-B (345 aa).

BIR repeat units lie at residues 46–112 and 154–219; these read RQRS…PFLQ and RLGS…DFLL. Zn(2+)-binding residues include C188, C191, H208, and C215. S237 carries the phosphoserine modification. A Phosphoserine; by MAPK1 modification is found at S241. S253 carries the post-translational modification Phosphoserine. S257 carries the phosphoserine; by MAPK1 modification. Residues 258 to 286 are disordered; the sequence is TESVSVPRAPTPGERSEPPKVSGPPLSTE. The RING-type zinc-finger motif lies at 298–333; sequence CKVCMDKDVSMLFVPCGHLVVCTECAPNLRHCPICR.

This sequence belongs to the IAP family. Post-translationally, auto-ubiquitinated, and degraded in a 2-step mechanism; a caspase-independent first step and a caspase-dependent second step. In terms of processing, phosphorylated via MAPK-dependent and CDK-dependent pathways during oocyte maturation. Phosphorylation does not appear to affect caspase inhibition or autoubiquitination activity.

Its subcellular location is the cytoplasm. It carries out the reaction S-ubiquitinyl-[E2 ubiquitin-conjugating enzyme]-L-cysteine + [acceptor protein]-L-lysine = [E2 ubiquitin-conjugating enzyme]-L-cysteine + N(6)-ubiquitinyl-[acceptor protein]-L-lysine.. Weak apoptotic suppressor. Has E3 ubiquitin-protein ligase activity. Weak inhibitor of caspase activity. The sequence is that of Baculoviral IAP repeat-containing protein 7-B (birc7-b) from Xenopus laevis (African clawed frog).